We begin with the raw amino-acid sequence, 233 residues long: Ion-translocating oxidoreductase complex subunit E (233 aa).

6 helical membrane-spanning segments follow: residues 18–38, 39–59, 69–89, 92–112, 128–148, and 182–202; these read ALVQ…ATNA, LGLG…VSAL, IPIY…LINA, FGLY…CIVI, ALDG…LGAL, and PFLL…LLAG.

Belongs to the NqrDE/RnfAE family. The complex is composed of six subunits: RnfA, RnfB, RnfC, RnfD, RnfE and RnfG.

The protein resides in the cell inner membrane. Its function is as follows. Part of a membrane-bound complex that couples electron transfer with translocation of ions across the membrane. The chain is Ion-translocating oxidoreductase complex subunit E from Yersinia pestis bv. Antiqua (strain Angola).